The following is a 370-amino-acid chain: tRNA pseudouridine(27/28) synthase (370 aa).

Asp-56 serves as the catalytic Nucleophile. Tyr-111 contributes to the substrate binding site.

The protein belongs to the tRNA pseudouridine synthase TruA family.

The protein localises to the mitochondrion. It catalyses the reaction uridine(27/28) in mitochondrial tRNA = pseudouridine(27/28) in mitochondrial tRNA. Its function is as follows. Mitochondrial-specific pseudouridine synthase catalyzing the formation of pseudouridine at positions 27 and 28 in the anticodon stem and loop of mitochondrial transfer RNAs. The sequence is that of tRNA pseudouridine(27/28) synthase (PUS2) from Saccharomyces cerevisiae (strain ATCC 204508 / S288c) (Baker's yeast).